A 247-amino-acid chain; its full sequence is HTH-type transcriptional regulator SarU (247 aa).

2 consecutive DNA-binding regions (H-T-H motif) follow at residues 53-76 and 178-201; these read LKEI…SLSK and LKDL…RLNN.

Belongs to the SarA family.

It is found in the cytoplasm. In terms of biological role, positive regulator of RNAII and RNAIII in a cell density-dependent manner. It can contribute to the expression of virulence genes controlled by agr. May also regulate target genes via an agr-independent pathway. This Staphylococcus aureus (strain NCTC 8325 / PS 47) protein is HTH-type transcriptional regulator SarU (sarU).